We begin with the raw amino-acid sequence, 414 residues long: uncharacterized protein (414 aa).

This is an uncharacterized protein from Rickettsia conorii (strain ATCC VR-613 / Malish 7).